Reading from the N-terminus, the 421-residue chain is Testin (421 aa).

The region spanning 92-199 is the PET domain; the sequence is MILTNPVAAK…GDVKLPREMD (108 aa). Positions 133-164 are disordered; sequence EKQPVAGSEGAQYRKKQLAKQLPAHDQDPSKC. Positions 155–164 are enriched in basic and acidic residues; that stretch reads PAHDQDPSKC. LIM zinc-binding domains are found at residues 234-297, 299-359, and 362-421; these read YSCY…CDSE, PRCA…NHAV, and QGCH…KMMS.

It belongs to the prickle / espinas / testin family. In terms of assembly, interacts via LIM domain 1 with ZYX. Interacts (via LIM domain 3) with ENAH and VASP. Interacts with ALKBH4, talin, actin, alpha-actinin, GRIP1 and PXN. Interacts (via LIM domain 2) with ACTL7A (via N-terminus). Heterodimer with ACTL7A; the heterodimer interacts with ENAH to form a heterotrimer.

It localises to the cytoplasm. It is found in the cell junction. The protein localises to the focal adhesion. Functionally, scaffold protein that may play a role in cell adhesion, cell spreading and in the reorganization of the actin cytoskeleton. Plays a role in the regulation of cell proliferation. May act as a tumor suppressor. The protein is Testin (TES) of Neofelis nebulosa (Clouded leopard).